The chain runs to 128 residues: Large ribosomal subunit protein uL22 (128 aa).

Belongs to the universal ribosomal protein uL22 family. As to quaternary structure, part of the 50S ribosomal subunit.

This protein binds specifically to 23S rRNA; its binding is stimulated by other ribosomal proteins, e.g. L4, L17, and L20. It is important during the early stages of 50S assembly. It makes multiple contacts with different domains of the 23S rRNA in the assembled 50S subunit and ribosome. Its function is as follows. The globular domain of the protein is located near the polypeptide exit tunnel on the outside of the subunit, while an extended beta-hairpin is found that lines the wall of the exit tunnel in the center of the 70S ribosome. The polypeptide is Large ribosomal subunit protein uL22 (Nitrobacter winogradskyi (strain ATCC 25391 / DSM 10237 / CIP 104748 / NCIMB 11846 / Nb-255)).